Consider the following 1074-residue polypeptide: MAPGMSGRGGAALLCLSALLAHASGRSHPASPSPPGPQASPVLPVSYRLSHTRLAFFLREARPPSPAVANSSLQRSEPFVVFQTKELPVLNVSLGPFSTSQVVARELLQPSSTLDIPERLTVNWKVRAFIVRSHVPASQPVVQVLFYVAGRDWDDFGVTERLPCVRLHAFRDAREVKSSCRLSGGLATCLVRAELPLAWFGPPAPAAPPTARRKSPDGLEPEATGESQQAELYYTLHAPDASGGCGGSRRGAGPGVGARAESPTQHPLLRIGSISLFRPPPRRTLQEHRLDSNLMIRLPDRPLKPGEVLSILLYLAPNSSSPSSPSVEHFTLRVKAKKGVTLLGTKSRSGQWHVTSELLTGAKHSTATVDVAWAQSTPLPPREGQGPLEILQLDFEMENFTSQSVKRRIMWHIDYRGHGALPDLERAVTELTVIQRDVQAILPLAMDTEIINTAILTGRTVAIPVKVIAIEVNGLVLDISALVECESDNEDIIKVSSSCDYVFVSGKESRGSMNARVTFRYDVLNAPLEMTVWVPKLPLHIELSDARLSQVKGWRVPILPDRRSVRESEDEDEEEEERRQSASRGCTLQYQHATLQVFTQFHTTSSEGTDQVVTMLGPDWLVEVTDLVSDFMRVGDPRVAHMVDSSTLAGLEPGTTPFKVVSPLTEAVLGETLLTVTEEKVSITQLQAQVVASLALSLRPSPGSSHTILATTAAQQTLSFLKQEALLSLWLSYSDGTTAPLSLYSPRDYGLLVSSLDEHVATVTQDRAFPLVVAEAEGSGELLRAELTIAESCQKTKRKSVLATTPVGLRVHFGRDEEDPTYDYPGPSQPGPGGGEDEARGAGPPGSALPAPEAPGPGTASPVVPPTEDFLPLPTGFLQVPRGLTDLEIGMYALLGVFCLAILVFLINCIVFVLRYRHKRIPPEGQTSMDHSHHWVFLGNGQPLRVQGELSPPAGNPLETVPAFCHGDHHSSGSSQTSVQSQVHGRGDGSSGGSARDQAEDPASSPTSKRKRVKFTTFTTLPSEELAYDSVPAGEEDEEEEEDLGWGCPDVAGPTRPTAPPDLHNYMRRIKEIA.

The N-terminal stretch at 1–25 (MAPGMSGRGGAALLCLSALLAHASG) is a signal peptide. Over 26–893 (RSHPASPSPP…LTDLEIGMYA (868 aa)) the chain is Extracellular. N70 and N91 each carry an N-linked (GlcNAc...) asparagine glycan. Disordered regions lie at residues 202–226 (PPAP…ATGE) and 241–264 (ASGG…ESPT). The span at 243-256 (GGCGGSRRGAGPGV) shows a compositional bias: gly residues. N-linked (GlcNAc...) asparagine glycans are attached at residues N318 and N399. 2 disordered regions span residues 563–585 (RSVR…ASRG) and 814–867 (GRDE…VPPT). The segment covering 841 to 862 (GAGPPGSALPAPEAPGPGTASP) has biased composition (low complexity). Residues 894–914 (LLGVFCLAILVFLINCIVFVL) traverse the membrane as a helical segment. Residues 915 to 1074 (RYRHKRIPPE…NYMRRIKEIA (160 aa)) are Cytoplasmic-facing. The interval 946–1063 (VQGELSPPAG…PTRPTAPPDL (118 aa)) is disordered. Residues 972–984 (SGSSQTSVQSQVH) show a composition bias toward low complexity. A compositionally biased stretch (acidic residues) spans 1034 to 1044 (GEEDEEEEEDL).

Belongs to the TMEM132 family.

Its subcellular location is the membrane. Functionally, required for normal inner ear hair cell function and hearing. This chain is Transmembrane protein 132E, found in Homo sapiens (Human).